The chain runs to 485 residues: Regulatory protein ViaA (485 aa).

It belongs to the ViaA family. As to quaternary structure, homodimer. Interacts with RavA.

It is found in the cytoplasm. Component of the RavA-ViaA chaperone complex, which may act on the membrane to optimize the function of some of the respiratory chains. ViaA stimulates the ATPase activity of RavA. The chain is Regulatory protein ViaA from Proteus mirabilis (strain HI4320).